Reading from the N-terminus, the 336-residue chain is Casein kinase I isoform beta (336 aa).

The 269-residue stretch at 17 to 285 (YKLVREIGFG…YLRQLFRLLF (269 aa)) folds into the Protein kinase domain. ATP is bound by residues 23–31 (IGFGSFGHV) and K46. The Proton acceptor role is filled by D136. The span at 309–320 (ASSSSGEGQQAQ) shows a compositional bias: low complexity. The disordered stretch occupies residues 309 to 336 (ASSSSGEGQQAQTPTGKSDNTKSEMKHS). Positions 327–336 (DNTKSEMKHS) are enriched in basic and acidic residues.

Belongs to the protein kinase superfamily. CK1 Ser/Thr protein kinase family. Casein kinase I subfamily. As to quaternary structure, monomer.

The protein localises to the cytoplasm. The catalysed reaction is L-seryl-[protein] + ATP = O-phospho-L-seryl-[protein] + ADP + H(+). It catalyses the reaction L-threonyl-[protein] + ATP = O-phospho-L-threonyl-[protein] + ADP + H(+). Its function is as follows. Casein kinases are operationally defined by their preferential utilization of acidic proteins such as caseins as substrates. It can phosphorylate a large number of proteins. Participates in Wnt signaling. The protein is Casein kinase I isoform beta (CSNK1B) of Bos taurus (Bovine).